Reading from the N-terminus, the 500-residue chain is Cytochrome P450 monooxygenase ausI (500 aa).

A helical transmembrane segment spans residues 8 to 28 (LALLGQPLVPGLMVVSAILYL). Cys440 is a heme binding site.

This sequence belongs to the cytochrome P450 family. The cofactor is heme.

It localises to the membrane. It participates in secondary metabolite biosynthesis; terpenoid biosynthesis. Its function is as follows. Cytochrome P450 monooxygenase; part of the gene cluster B that mediates the biosynthesis of the fungal meroterpenoid acetoxydehydroaustin. The first step of the pathway is the synthesis of 3,5-dimethylorsellinic acid by the polyketide synthase ausA. 3,5-dimethylorsellinic acid is then prenylated by the polyprenyl transferase ausN. Further epoxidation by the FAD-dependent monooxygenase ausM and cyclization by the probable terpene cyclase ausL lead to the formation of protoaustinoid A. Protoaustinoid A is then oxidized to spiro-lactone preaustinoid A3 by the combined action of the FAD-binding monooxygenases ausB and ausC, and the dioxygenase ausE. Acid-catalyzed keto-rearrangement and ring contraction of the tetraketide portion of preaustinoid A3 by ausJ lead to the formation of preaustinoid A4. The aldo-keto reductase ausK, with the help of ausH, is involved in the next step by transforming preaustinoid A4 into isoaustinone which is in turn hydroxylated by the P450 monooxygenase ausI to form austinolide. The cytochrome P450 monooxygenase ausG then modifies austinolide to austinol. Austinol is further acetylated to austin by the O-acetyltransferase ausP, which spontaneously changes to dehydroaustin. The cytochrome P450 monooxygenase then converts dehydroaustin is into 7-dehydrodehydroaustin. The hydroxylation catalyzed by ausR permits the second O-acetyltransferase ausQ to add an additional acetyl group to the molecule, leading to the formation of acetoxydehydroaustin. Due to genetic rearrangements of the clusters and the subsequent loss of some enzymes, the end product of the Penicillium brasilianum austinoid biosynthesis clusters is acetoxydehydroaustin. In Penicillium brasilianum, this protein is Cytochrome P450 monooxygenase ausI.